We begin with the raw amino-acid sequence, 51 residues long: Insulin (51 aa).

Cystine bridges form between Cys8–Cys37, Cys20–Cys50, and Cys36–Cys41.

The protein belongs to the insulin family. As to quaternary structure, heterodimer of a B chain and an A chain linked by two disulfide bonds.

It is found in the secreted. Its function is as follows. Insulin decreases blood glucose concentration. It increases cell permeability to monosaccharides, amino acids and fatty acids. It accelerates glycolysis, the pentose phosphate cycle, and glycogen synthesis in liver. The sequence is that of Insulin from Pagrus major (Red sea bream).